The chain runs to 78 residues: U-scoloptoxin(04)-Er1e (78 aa).

Positions 1-24 (MTRHLIFAAMLLVCLFVCWNAVGA) are cleaved as a signal peptide. The propeptide occupies 25–28 (RDAR).

Belongs to the scoloptoxin-04 family. Contains 2 disulfide bonds. In terms of tissue distribution, expressed by the venom gland.

It is found in the secreted. The protein is U-scoloptoxin(04)-Er1e of Ethmostigmus rubripes (Giant centipede).